We begin with the raw amino-acid sequence, 465 residues long: Serine hydroxymethyltransferase (465 aa).

The residue at position 241 (Lys241) is an N6-(pyridoxal phosphate)lysine.

It belongs to the SHMT family. In terms of assembly, homotetramer. Pyridoxal 5'-phosphate serves as cofactor. Highest expression in the ovary and testis. 6- to 7-fold lower expression in hemocyte, silk gland, midgut and fat body.

The enzyme catalyses (6R)-5,10-methylene-5,6,7,8-tetrahydrofolate + glycine + H2O = (6S)-5,6,7,8-tetrahydrofolate + L-serine. It participates in one-carbon metabolism; tetrahydrofolate interconversion. Functionally, interconversion of serine and glycine. This chain is Serine hydroxymethyltransferase (692975), found in Bombyx mori (Silk moth).